The following is a 259-amino-acid chain: Insulin-like growth factor-binding protein 4 (259 aa).

A signal peptide spans 1 to 22; that stretch reads MLPLCLVAALLLSASGPRPSLG. Positions 24–104 constitute an IGFBP N-terminal domain; sequence EAIHCPPCSE…MHGQGLCMEL (81 aa). Intrachain disulfides connect C28–C54, C31–C56, C39–C57, C45–C60, C68–C81, and C75–C101. Residues 115–136 are disordered; that stretch reads QPSDKDEGDHPNNSFSPCSPQD. An N-linked (GlcNAc...) asparagine glycan is attached at N126. Intrachain disulfides connect C132-C139, C175-C205, C216-C227, and C229-C250. Residues 172–250 enclose the Thyroglobulin type-1 domain; sequence QGSCQSELHR…GLEPKGELDC (79 aa). S256 is subject to Phosphoserine.

As to quaternary structure, binds IGF2 more than IGF1.

It localises to the secreted. Functionally, IGF-binding proteins prolong the half-life of the IGFs and have been shown to either inhibit or stimulate the growth promoting effects of the IGFs on cell culture. They alter the interaction of IGFs with their cell surface receptors. This chain is Insulin-like growth factor-binding protein 4 (IGFBP4), found in Sus scrofa (Pig).